A 445-amino-acid chain; its full sequence is Methionine aminopeptidase 2-2 (445 aa).

Positions 1-92 are disordered; sequence MAAQASEDLK…RVPISQLFPN (92 aa). Over residues 18–33 the composition is skewed to low complexity; that stretch reads AGDSKAAAATAGQAEA. The span at 34-46 shows a compositional bias: acidic residues; the sequence is GEAEDDSDDDEVD. The segment covering 47 to 58 has biased composition (low complexity); it reads GNAAPEGAASGA. The span at 59–74 shows a compositional bias: basic residues; that stretch reads AKKKKKRKPKKKKKGG. Residue His198 participates in substrate binding. A divalent metal cation is bound by residues Asp218, Asp229, and His298. His306 contributes to the substrate binding site. Glu331 and Glu426 together coordinate a divalent metal cation.

It belongs to the peptidase M24A family. Methionine aminopeptidase eukaryotic type 2 subfamily. Requires Co(2+) as cofactor. The cofactor is Zn(2+). Mn(2+) is required as a cofactor. It depends on Fe(2+) as a cofactor.

It localises to the cytoplasm. The enzyme catalyses Release of N-terminal amino acids, preferentially methionine, from peptides and arylamides.. Its function is as follows. Cotranslationally removes the N-terminal methionine from nascent proteins. The N-terminal methionine is often cleaved when the second residue in the primary sequence is small and uncharged (Met-Ala-, Cys, Gly, Pro, Ser, Thr, or Val). The protein is Methionine aminopeptidase 2-2 of Aspergillus terreus (strain NIH 2624 / FGSC A1156).